A 200-amino-acid chain; its full sequence is Small ribosomal subunit protein eS1 (200 aa).

This sequence belongs to the eukaryotic ribosomal protein eS1 family.

The sequence is that of Small ribosomal subunit protein eS1 from Thermococcus onnurineus (strain NA1).